Reading from the N-terminus, the 268-residue chain is Interleukin-1 alpha (268 aa).

The propeptide occupies Met-1–Arg-112. An N6-acetyllysine modification is found at Lys-82. A nuclear localization signal (NLS) region spans residues Lys-82–Leu-86. Ser-87 is modified (phosphoserine). Asn-102 and Asn-141 each carry an N-linked (GlcNAc...) asparagine glycan.

Belongs to the IL-1 family. Monomer. Interacts with TMED10; the interaction mediates the translocation from the cytoplasm into the ERGIC (endoplasmic reticulum-Golgi intermediate compartment) and thereby secretion. Interacts with IL1R1. Interacts with S100A13; this interaction is the first step in the export of IL1A, followed by direct translocation of this complex across the plasma membrane. In terms of processing, acetylated within its nuclear localization sequence, which impacts subcellular localization. Post-translationally, proteolytic processed by CAPN1 in a calcium-dependent manner. Cleavage from 31 kDa precursor to 18 kDa biologically active molecules. Phosphorylated. Phosphorylation greatly enhances susceptibility to digestion and promotes the conversion of pre-IL1A alpha to the biologically active IL1A.

It is found in the nucleus. The protein resides in the cytoplasm. The protein localises to the secreted. Functionally, cytokine constitutively present intracellularly in nearly all resting non-hematopoietic cells that plays an important role in inflammation and bridges the innate and adaptive immune systems. After binding to its receptor IL1R1 together with its accessory protein IL1RAP, forms the high affinity interleukin-1 receptor complex. Signaling involves the recruitment of adapter molecules such as MYD88, IRAK1 or IRAK4. In turn, mediates the activation of NF-kappa-B and the three MAPK pathways p38, p42/p44 and JNK pathways. Within the cell, acts as an alarmin and cell death results in its liberation in the extracellular space after disruption of the cell membrane to induce inflammation and alert the host to injury or damage. In addition to its role as a danger signal, which occurs when the cytokine is passively released by cell necrosis, directly senses DNA damage and acts as signal for genotoxic stress without loss of cell integrity. The chain is Interleukin-1 alpha (IL1A) from Capra hircus (Goat).